A 1252-amino-acid chain; its full sequence is Guanine nucleotide exchange factor SDC25 (1252 aa).

An SH3 domain is found at 26–97 (QPIDVVECTY…PPSFTRSILN (72 aa)). Disordered regions lie at residues 409–454 (IPAS…DTIW) and 623–648 (LNLDNAKDKKNGSQNTDIQEEEDEYE). Residues 416-428 (TSCSSETSHHSPS) are compositionally biased toward low complexity. Positions 782 to 914 (SNNRIKGGSK…LLKEVNQKFK (133 aa)) constitute an N-terminal Ras-GEF domain. Positions 952 to 1199 (DPVLFATQLT…YQLSLIIEPK (248 aa)) constitute a Ras-GEF domain. Residues 1201–1252 (RKKVVPNSNSNNKSQEKSRDDQTDEGKTSTKKDRFSKFQLHKTKKKAPKVSK) form a disordered region. Over residues 1214-1236 (SQEKSRDDQTDEGKTSTKKDRFS) the composition is skewed to basic and acidic residues. Residues 1239–1252 (QLHKTKKKAPKVSK) show a composition bias toward basic residues.

Promotes the exchange of Ras-bound GDP by GTP. The sequence is that of Guanine nucleotide exchange factor SDC25 (SDC25) from Saccharomyces cerevisiae (strain RM11-1a) (Baker's yeast).